Reading from the N-terminus, the 236-residue chain is Hydantoin racemase (236 aa).

Homohexamer, homoheptamer or homooctamer.

It catalyses the reaction a D-5-monosubstituted hydantoin = a L-5-monosubstituted hydantoin. The enzyme catalyses D-5-benzylhydantoin = L-5-benzylhydantoin. Completely inhibited by HgCl(2) and iodoacetamide. Stimulated by dithiothreitol. Involved in the asymmetric conversion of racemic 5-substituted hydantoins to the corresponding L-amino acids. Catalyzes the racemization via enolization of D- and L-5-monosubstituted hydantoins. It shows preference for hydantoins with arylalkyl side chains such as 5-benzylhydantoin (BH) and, to a lesser extent, 5-(3-indolylmethylene)hydantoin (IMH). The chain is Hydantoin racemase from Paenarthrobacter aurescens (Arthrobacter aurescens).